The following is a 294-amino-acid chain: UDP-3-O-acyl-N-acetylglucosamine deacetylase (294 aa).

H75, H232, and D236 together coordinate Zn(2+). The active-site Proton donor is H259.

The protein belongs to the LpxC family. It depends on Zn(2+) as a cofactor.

It catalyses the reaction a UDP-3-O-[(3R)-3-hydroxyacyl]-N-acetyl-alpha-D-glucosamine + H2O = a UDP-3-O-[(3R)-3-hydroxyacyl]-alpha-D-glucosamine + acetate. It participates in glycolipid biosynthesis; lipid IV(A) biosynthesis; lipid IV(A) from (3R)-3-hydroxytetradecanoyl-[acyl-carrier-protein] and UDP-N-acetyl-alpha-D-glucosamine: step 2/6. Its function is as follows. Catalyzes the hydrolysis of UDP-3-O-myristoyl-N-acetylglucosamine to form UDP-3-O-myristoylglucosamine and acetate, the committed step in lipid A biosynthesis. This is UDP-3-O-acyl-N-acetylglucosamine deacetylase from Sulfurovum sp. (strain NBC37-1).